Here is a 289-residue protein sequence, read N- to C-terminus: uncharacterized protein (289 aa).

Positions 25–66 are disordered; the sequence is GGSGDSQSAHTPSTSIHTQNNSTPNKNTSTPPVNVSNANNLE. A compositionally biased stretch (polar residues) spans 33–43; it reads AHTPSTSIHTQ. A compositionally biased stretch (low complexity) spans 44–59; that stretch reads NNSTPNKNTSTPPVNV.

This is an uncharacterized protein from Haemophilus influenzae (strain ATCC 51907 / DSM 11121 / KW20 / Rd).